Consider the following 391-residue polypeptide: Chorismate synthase (391 aa).

An NADP(+)-binding site is contributed by arginine 48. FMN-binding positions include 126–128, glycine 286, 301–305, and arginine 328; these read RAS and KPTSS.

It belongs to the chorismate synthase family. The cofactor is FMNH2.

The enzyme catalyses 5-O-(1-carboxyvinyl)-3-phosphoshikimate = chorismate + phosphate. It participates in metabolic intermediate biosynthesis; chorismate biosynthesis; chorismate from D-erythrose 4-phosphate and phosphoenolpyruvate: step 7/7. In terms of biological role, catalyzes the anti-1,4-elimination of the C-3 phosphate and the C-6 proR hydrogen from 5-enolpyruvylshikimate-3-phosphate (EPSP) to yield chorismate, which is the branch point compound that serves as the starting substrate for the three terminal pathways of aromatic amino acid biosynthesis. This reaction introduces a second double bond into the aromatic ring system. This Saccharolobus islandicus (strain L.S.2.15 / Lassen #1) (Sulfolobus islandicus) protein is Chorismate synthase.